Reading from the N-terminus, the 117-residue chain is Large ribosomal subunit protein bL20 (117 aa).

It belongs to the bacterial ribosomal protein bL20 family.

Binds directly to 23S ribosomal RNA and is necessary for the in vitro assembly process of the 50S ribosomal subunit. It is not involved in the protein synthesizing functions of that subunit. The sequence is that of Large ribosomal subunit protein bL20 from Rickettsia massiliae (strain Mtu5).